Consider the following 412-residue polypeptide: NADH-quinone oxidoreductase subunit D (412 aa).

Belongs to the complex I 49 kDa subunit family. As to quaternary structure, NDH-1 is composed of 14 different subunits. Subunits NuoB, C, D, E, F, and G constitute the peripheral sector of the complex.

Its subcellular location is the cell inner membrane. It carries out the reaction a quinone + NADH + 5 H(+)(in) = a quinol + NAD(+) + 4 H(+)(out). Its function is as follows. NDH-1 shuttles electrons from NADH, via FMN and iron-sulfur (Fe-S) centers, to quinones in the respiratory chain. The immediate electron acceptor for the enzyme in this species is believed to be a menaquinone. Couples the redox reaction to proton translocation (for every two electrons transferred, four hydrogen ions are translocated across the cytoplasmic membrane), and thus conserves the redox energy in a proton gradient. This Flavobacterium psychrophilum (strain ATCC 49511 / DSM 21280 / CIP 103535 / JIP02/86) protein is NADH-quinone oxidoreductase subunit D.